We begin with the raw amino-acid sequence, 70 residues long: Eglin C (70 aa).

The protein belongs to the protease inhibitor I13 (potato type I serine protease inhibitor) family.

Functionally, inhibits both elastase and cathepsin G. This is Eglin C from Hirudo medicinalis (Medicinal leech).